The sequence spans 340 residues: Uroporphyrinogen decarboxylase (340 aa).

Residues 21–25, Phe40, Asp71, Tyr146, Ser201, and His316 contribute to the substrate site; that span reads RQAGR.

This sequence belongs to the uroporphyrinogen decarboxylase family. Homodimer.

Its subcellular location is the cytoplasm. The enzyme catalyses uroporphyrinogen III + 4 H(+) = coproporphyrinogen III + 4 CO2. Its pathway is porphyrin-containing compound metabolism; protoporphyrin-IX biosynthesis; coproporphyrinogen-III from 5-aminolevulinate: step 4/4. Functionally, catalyzes the decarboxylation of four acetate groups of uroporphyrinogen-III to yield coproporphyrinogen-III. The sequence is that of Uroporphyrinogen decarboxylase from Rickettsia bellii (strain RML369-C).